A 159-amino-acid chain; its full sequence is Endoribonuclease YbeY (159 aa).

Zn(2+) is bound by residues H119, H123, and H129.

It belongs to the endoribonuclease YbeY family. Requires Zn(2+) as cofactor.

The protein resides in the cytoplasm. In terms of biological role, single strand-specific metallo-endoribonuclease involved in late-stage 70S ribosome quality control and in maturation of the 3' terminus of the 16S rRNA. The chain is Endoribonuclease YbeY from Acinetobacter baylyi (strain ATCC 33305 / BD413 / ADP1).